We begin with the raw amino-acid sequence, 315 residues long: Heme oxygenase 2 (315 aa).

The segment covering 1 to 12 (MSSEVETSEGVD) has biased composition (acidic residues). Positions 1 to 28 (MSSEVETSEGVDESEKNSMAPEKENHTK) are disordered. S2 carries the N-acetylserine modification. S2 bears the Phosphoserine mark. The Cytoplasmic portion of the chain corresponds to 2-294 (SSEVETSEGV…TTVAVLRKPS (293 aa)). Basic and acidic residues predominate over residues 13–28 (ESEKNSMAPEKENHTK). Residues H44, Y153, K198, and R202 each coordinate heme b. HRM repeat units lie at residues 263–268 (KCPFYA) and 280–285 (NCPFQT). An S-nitrosocysteine mark is found at C264 and C281. Residues 295–315 (LQLILAASVALVAGLLAWYYM) traverse the membrane as a helical; Anchor for type IV membrane protein segment.

It belongs to the heme oxygenase family. In terms of processing, a soluble form arises by proteolytic removal of the membrane anchor. Post-translationally, S-nitrosylated by BLVRB. Ubiquitous.

The protein localises to the microsome membrane. Its subcellular location is the endoplasmic reticulum membrane. It carries out the reaction heme b + 3 reduced [NADPH--hemoprotein reductase] + 3 O2 = biliverdin IXalpha + CO + Fe(2+) + 3 oxidized [NADPH--hemoprotein reductase] + 3 H2O + H(+). Catalyzes the oxidative cleavage of heme at the alpha-methene bridge carbon, released as carbon monoxide (CO), to generate biliverdin IXalpha, while releasing the central heme iron chelate as ferrous iron. This Mus musculus (Mouse) protein is Heme oxygenase 2 (Hmox2).